The chain runs to 780 residues: Acyl-CoA dehydrogenase family member 11 (780 aa).

The residue at position 177 (K177) is an N6-acetyllysine. Phosphotyrosine is present on Y324. The residue at position 391 (K391) is an N6-succinyllysine. Residues 504 to 514 and 538 to 540 each bind FAD; these read FCMTEPDVASS and WSS. S514 provides a ligand contact to substrate. 629 to 632 serves as a coordination point for substrate; that stretch reads GPGR. Residues R657, Q727, and 727–731 contribute to the FAD site; that span reads QVCGG. Residue G755 coordinates substrate. 756 to 758 is an FAD binding site; that stretch reads PDE.

This sequence belongs to the acyl-CoA dehydrogenase family. As to quaternary structure, homodimer. The cofactor is FAD. As to expression, widely expressed with highest levels in brain followed by liver, heart and kidney.

Its subcellular location is the peroxisome. It is found in the mitochondrion membrane. The catalysed reaction is a 2,3-saturated acyl-CoA + oxidized [electron-transfer flavoprotein] + H(+) = a (2E)-enoyl-CoA + reduced [electron-transfer flavoprotein]. It carries out the reaction docosanoyl-CoA + oxidized [electron-transfer flavoprotein] + H(+) = (2E)-docosenoyl-CoA + reduced [electron-transfer flavoprotein]. It catalyses the reaction tetracosanoyl-CoA + oxidized [electron-transfer flavoprotein] + H(+) = (2E)-tetracosenoyl-CoA + reduced [electron-transfer flavoprotein]. The enzyme catalyses eicosanoyl-CoA + oxidized [electron-transfer flavoprotein] + H(+) = (2E)-eicosenoyl-CoA + reduced [electron-transfer flavoprotein]. The catalysed reaction is hexacosanoyl-CoA + oxidized [electron-transfer flavoprotein] + H(+) = (2E)-hexacosenoyl-CoA + reduced [electron-transfer flavoprotein]. It carries out the reaction tricosanoyl-CoA + oxidized [electron-transfer flavoprotein] + H(+) = (2E)-tricosenoyl-CoA + reduced [electron-transfer flavoprotein]. It participates in lipid metabolism; fatty acid beta-oxidation. Its function is as follows. Acyl-CoA dehydrogenase, that exhibits maximal activity towards saturated C22-CoA. Probably participates in beta-oxydation and energy production but could also play a role in the metabolism of specific fatty acids to control fatty acids composition of cellular lipids in brain. This is Acyl-CoA dehydrogenase family member 11 (ACAD11) from Homo sapiens (Human).